A 433-amino-acid chain; its full sequence is PC-esterase domain-containing protein 1B (433 aa).

The disordered stretch occupies residues 386 to 433 (PPCHQRQAPVVHRGFPRHFARGPYSNPWRDRPRRPPKHSPAGLESRPQ).

It belongs to the PC-esterase family.

This chain is PC-esterase domain-containing protein 1B (Pced1b), found in Mus musculus (Mouse).